The primary structure comprises 153 residues: Large ribosomal subunit protein uL22 (153 aa).

The tract at residues I110–E153 is disordered. The segment covering K144–E153 has biased composition (basic and acidic residues).

It belongs to the universal ribosomal protein uL22 family. Part of the 50S ribosomal subunit.

Functionally, this protein binds specifically to 23S rRNA; its binding is stimulated by other ribosomal proteins, e.g. L4, L17, and L20. It is important during the early stages of 50S assembly. It makes multiple contacts with different domains of the 23S rRNA in the assembled 50S subunit and ribosome. The globular domain of the protein is located near the polypeptide exit tunnel on the outside of the subunit, while an extended beta-hairpin is found that lines the wall of the exit tunnel in the center of the 70S ribosome. This Mycolicibacterium smegmatis (strain ATCC 700084 / mc(2)155) (Mycobacterium smegmatis) protein is Large ribosomal subunit protein uL22.